The chain runs to 387 residues: Sialic acid-binding Ig-like lectin 13 (387 aa).

The first 15 residues, 1 to 15 (MLPLLLPLLWAGALA), serve as a signal peptide directing secretion. Residues 16–138 (LEGIFQLEVP…KDPPLSVHVT (123 aa)) enclose the Ig-like V-type domain. Over 16–341 (LEGIFQLEVP…QRKSGPMAEV (326 aa)) the chain is Extracellular. Disulfide bonds link Cys35-Cys168, Cys40-Cys100, and Cys162-Cys211. N-linked (GlcNAc...) asparagine glycosylation occurs at Asn99. Arg118 contacts N-acetylneuraminate. Residues 144-227 (PDILIPGALK…AGVTTTRTVR (84 aa)) form the Ig-like C2-type 1 domain. Residues Asn229, Asn236, and Asn254 are each glycosylated (N-linked (GlcNAc...) asparagine). Positions 234–326 (PQNLTLTVFQ…RNPLGSQQVS (93 aa)) constitute an Ig-like C2-type 2 domain. An intrachain disulfide couples Cys270 to Cys314. Residues 342–362 (VLVAIGEAAVKILLLFLCLII) traverse the membrane as a helical segment. At 363-387 (LRVKSHRRKAAKAATGVEAAKVVKG) the chain is on the cytoplasmic side.

It belongs to the immunoglobulin superfamily. SIGLEC (sialic acid binding Ig-like lectin) family.

It is found in the membrane. Putative adhesion molecule that mediates sialic-acid dependent binding to cells. The sequence is that of Sialic acid-binding Ig-like lectin 13 (SIGLEC13) from Pan troglodytes (Chimpanzee).